The sequence spans 361 residues: Peptide chain release factor 1 (361 aa).

The residue at position 237 (glutamine 237) is an N5-methylglutamine.

It belongs to the prokaryotic/mitochondrial release factor family. Post-translationally, methylated by PrmC. Methylation increases the termination efficiency of RF1.

The protein resides in the cytoplasm. Its function is as follows. Peptide chain release factor 1 directs the termination of translation in response to the peptide chain termination codons UAG and UAA. This Thioalkalivibrio sulfidiphilus (strain HL-EbGR7) protein is Peptide chain release factor 1.